A 1049-amino-acid polypeptide reads, in one-letter code: Exotoxin PaxA (1049 aa).

The next 4 membrane-spanning stretches (helical) occupy residues 246-266, 311-331, 375-395, and 397-417; these read GLGL…FTLA, GPAA…LSFL, ITTI…ASAG, and LVGA…SGIL. Hemolysin-type calcium-binding repeat units lie at residues 744–761, 762–779, 780–797, 798–815, 826–843, and 844–861; these read KGSK…DDLL, NGND…NDEL, RGDN…NDKL, FGGN…DDEL, RGGK…SDFL, and DGGE…NDFY.

The protein belongs to the RTX prokaryotic toxin (TC 1.C.11) family.

It is found in the secreted. Its subcellular location is the host cell membrane. Its function is as follows. PaxA is associated with abortion cases in swine and septicemia in young piglets. Shows cohemolytic activity with the sphingomyelinase of S.aureus but is devoid of direct hemolytic activity. In Pasteurella aerogenes, this protein is Exotoxin PaxA (paxA).